A 278-amino-acid chain; its full sequence is S-formylglutathione hydrolase YeiG (278 aa).

Active-site charge relay system residues include Ser-145, Asp-223, and His-256.

The protein belongs to the esterase D family.

It catalyses the reaction S-formylglutathione + H2O = formate + glutathione + H(+). Its function is as follows. Serine hydrolase involved in the detoxification of formaldehyde. Hydrolyzes S-formylglutathione to glutathione and formate. In Escherichia coli (strain SMS-3-5 / SECEC), this protein is S-formylglutathione hydrolase YeiG (yeiG).